A 354-amino-acid chain; its full sequence is Protein FAM181A (354 aa).

2 stretches are compositionally biased toward basic and acidic residues: residues 1–14 and 129–142; these read MPLE…ERND and YLKR…RRLL. 3 disordered regions span residues 1-35, 117-160, and 172-193; these read MPLE…KQVS, LPRG…CKEK, and AKEQ…VPMR.

This sequence belongs to the FAM181 family.

The chain is Protein FAM181A (FAM181A) from Homo sapiens (Human).